A 212-amino-acid polypeptide reads, in one-letter code: Cytidylate kinase (212 aa).

7-15 (GPAASGKGT) lines the ATP pocket.

Belongs to the cytidylate kinase family. Type 1 subfamily.

It localises to the cytoplasm. The catalysed reaction is CMP + ATP = CDP + ADP. It carries out the reaction dCMP + ATP = dCDP + ADP. The protein is Cytidylate kinase of Nitrobacter winogradskyi (strain ATCC 25391 / DSM 10237 / CIP 104748 / NCIMB 11846 / Nb-255).